We begin with the raw amino-acid sequence, 397 residues long: Growth-regulating factor 1 (397 aa).

Residues 18-53 form the QLQ domain; sequence PFTASQWQELEHQALIYKYMASGTPIPSDLILPLRR. 2 short sequence motifs (bipartite nuclear localization signal) span residues 86–105 and 123–130; these read RKAE…KKWR and RGKNRSRK. The WRC domain occupies 90 to 134; it reads DPEPGRCRRTDGKKWRCSKEAYPDSKYCEKHMHRGKNRSRKPVEM. A disordered region spans residues 117–176; sequence CEKHMHRGKNRSRKPVEMSLATPPPPSSSATSAASNTSAGVAPTTTTTSSPAPSYSRPAP. Residues 120–129 are compositionally biased toward basic residues; it reads HMHRGKNRSR. A compositionally biased stretch (low complexity) spans 144–174; that stretch reads SSATSAASNTSAGVAPTTTTTSSPAPSYSRP.

This sequence belongs to the GRF family.

The protein localises to the nucleus. Its function is as follows. Transcription activator that plays a regulatory role in gibberellin-induced stem elongation. The sequence is that of Growth-regulating factor 1 (GRF1) from Oryza sativa subsp. japonica (Rice).